Consider the following 196-residue polypeptide: Dual-action ribosomal maturation protein DarP (196 aa).

It belongs to the DarP family.

Its subcellular location is the cytoplasm. Member of a network of 50S ribosomal subunit biogenesis factors which assembles along the 30S-50S interface, preventing incorrect 23S rRNA structures from forming. Promotes peptidyl transferase center (PTC) maturation. The polypeptide is Dual-action ribosomal maturation protein DarP (Stenotrophomonas maltophilia (strain R551-3)).